The following is a 331-amino-acid chain: Adenosine deaminase (331 aa).

His12 and His14 together coordinate Zn(2+). Substrate is bound by residues His14, Asp16, and Gly170. His197 is a binding site for Zn(2+). Glu200 serves as the catalytic Proton donor. Position 278 (Asp278) interacts with Zn(2+). Asp279 lines the substrate pocket.

It belongs to the metallo-dependent hydrolases superfamily. Adenosine and AMP deaminases family. Adenosine deaminase subfamily. The cofactor is Zn(2+).

It carries out the reaction adenosine + H2O + H(+) = inosine + NH4(+). It catalyses the reaction 2'-deoxyadenosine + H2O + H(+) = 2'-deoxyinosine + NH4(+). Catalyzes the hydrolytic deamination of adenosine and 2-deoxyadenosine. The chain is Adenosine deaminase from Shewanella sp. (strain MR-4).